The primary structure comprises 470 residues: MPGFDYKFLEKPKRRLLCPLCGKPMREPVQVSTCGHRFCDTCLQEFLSEGVFKCPEDQLPLDYAKIYPDPELEVQVLGLPIRCIHSEEGCRWSGPLRHLQGHLNTCSFNVIPCPNRCPMKLSRRDLPAHLQHDCPKRRLKCEFCGCDFSGEAYESHEGMCPQESVYCENKCGARMMRRLLAQHATSECPKRTQPCTYCTKEFVFDTIQSHQYQCPRLPVACPNQCGVGTVAREDLPGHLKDSCNTALVLCPFKDSGCKHRCPKLAMARHVEESVKPHLAMMCALVSRQRQELQELRRELEELSVGSDGVLIWKIGSYGRRLQEAKAKPNLECFSPAFYTHKYGYKLQVSAFLNGNGSGEGTHLSLYIRVLPGAFDNLLEWPFARRVTFSLLDQSDPGLAKPQHVTETFHPDPNWKNFQKPGTWRGSLDESSLGFGYPKFISHQDIRKRNYVRDDAVFIRAAVELPRKILS.

The segment at 18-58 (CPLCGKPMREPVQVSTCGHRFCDTCLQEFLSEGVFKCPEDQ) adopts an RING-type zinc-finger fold. TRAF-type zinc fingers lie at residues 102–154 (HLNT…EAYE), 155–208 (SHEG…DTIQ), and 209–266 (SHQY…KLAM). Lysine 263 is covalently cross-linked (Glycyl lysine isopeptide (Lys-Gly) (interchain with G-Cter in ubiquitin)). The stretch at 277-309 (HLAMMCALVSRQRQELQELRRELEELSVGSDGV) forms a coiled coil. One can recognise an MATH domain in the interval 307 to 462 (DGVLIWKIGS…DDAVFIRAAV (156 aa)). Serine 426 bears the Phosphoserine mark.

This sequence belongs to the TNF receptor-associated factor family. B subfamily. In terms of assembly, homotrimer. Interacts with LTBR/TNFRSF3, NGFR/TNFRSF16, RPS6KB1 and TGFB1I1. Interacts with SMURF1. Interacts (via TRAF domain) with MAP3K4 (via kinase domain). Interacts with NCF1, TICAM1, IRAK1 and TRAF6, and is probably part of a complex containing TRAF4, NCF1, TICAM1, IRAK1 and TRAF6. Interacts (via MATH domain) with GP6 and GP1BB. Interacts with EGFR (via C-terminal region); this interaction promotes the formation of EGFR asymmetric dimers. Interacts with PKM; this interaction promotes PKM kinase activity. In terms of processing, polyubiquitinated, leading to its proteasomal degradation. Ubiquitinated at Lys-263 by the SCF(FBXL2) complex, leading to its degradation by the proteasome. In terms of tissue distribution, expressed in epithelial cells of thymus, dendritic cells of lymph node, and in the basal cell layer of epithelia such as epidermis, nasopharynx, respiratory tract, salivary gland, and esophagus.

The protein localises to the cytoplasm. The protein resides in the nucleus. It is found in the perinuclear region. Its subcellular location is the cell junction. It localises to the tight junction. The protein localises to the cell membrane. The protein resides in the cytoskeleton. The enzyme catalyses S-ubiquitinyl-[E2 ubiquitin-conjugating enzyme]-L-cysteine + [acceptor protein]-L-lysine = [E2 ubiquitin-conjugating enzyme]-L-cysteine + N(6)-ubiquitinyl-[acceptor protein]-L-lysine.. Its pathway is protein degradation; proteasomal ubiquitin-dependent pathway. In terms of biological role, adapter protein with E3 ligase activity that is involved in many diverse biological processes including cell proliferation, migration, differentiation, DNA repair, platelet activation or apoptosis. Promotes EGFR-mediated signaling by facilitating the dimerization of EGFR and downstream AKT activation thereby promoting cell proliferation. Ubiquitinates SMURF2 through 'Lys-48'-linked ubiquitin chain leading to SMURF2 degradation through the proteasome and subsequently osteogenic differentiation. Promotes 'Lys-63'-mediated ubiquitination of CHK1 which in turn activates cell cycle arrest and activation of DNA repair. In addition, promotes an atypical 'Lys-29'-linked ubiquitination at the C-terminal end of IRS1 which is crucial for insulin-like growth factor (IGF) signal transduction. Regulates activation of NF-kappa-B in response to signaling through Toll-like receptors. Required for normal skeleton development, and for normal development of the respiratory tract. Required for activation of RPS6KB1 in response to TNF signaling. Modulates TRAF6 functions. Inhibits adipogenic differentiation by activating pyruvate kinase PKM activity and subsequently the beta-catenin signaling pathway. The polypeptide is TNF receptor-associated factor 4 (TRAF4) (Homo sapiens (Human)).